The primary structure comprises 349 residues: Peptide chain release factor 1 (349 aa).

N5-methylglutamine is present on Gln233.

Belongs to the prokaryotic/mitochondrial release factor family. Post-translationally, methylated by PrmC. Methylation increases the termination efficiency of RF1.

Its subcellular location is the cytoplasm. Functionally, peptide chain release factor 1 directs the termination of translation in response to the peptide chain termination codons UAG and UAA. The polypeptide is Peptide chain release factor 1 (Pelotomaculum thermopropionicum (strain DSM 13744 / JCM 10971 / SI)).